The following is a 335-amino-acid chain: Glycerol-3-phosphate dehydrogenase [NAD(P)+] (335 aa).

S10, F11, R31, and K105 together coordinate NADPH. 3 residues coordinate sn-glycerol 3-phosphate: K105, G136, and S138. A140 provides a ligand contact to NADPH. Sn-glycerol 3-phosphate-binding residues include K191, D244, S254, R255, and N256. Catalysis depends on K191, which acts as the Proton acceptor. Residue R255 coordinates NADPH. NADPH contacts are provided by V279 and E281.

This sequence belongs to the NAD-dependent glycerol-3-phosphate dehydrogenase family.

The protein resides in the cytoplasm. It carries out the reaction sn-glycerol 3-phosphate + NAD(+) = dihydroxyacetone phosphate + NADH + H(+). It catalyses the reaction sn-glycerol 3-phosphate + NADP(+) = dihydroxyacetone phosphate + NADPH + H(+). It participates in membrane lipid metabolism; glycerophospholipid metabolism. Catalyzes the reduction of the glycolytic intermediate dihydroxyacetone phosphate (DHAP) to sn-glycerol 3-phosphate (G3P), the key precursor for phospholipid synthesis. The protein is Glycerol-3-phosphate dehydrogenase [NAD(P)+] of Myxococcus xanthus (strain DK1622).